Consider the following 385-residue polypeptide: Bifunctional chorismate mutase/prephenate dehydratase (385 aa).

Positions 1-92 constitute a Chorismate mutase domain; it reads MPSKNDLLSF…ESVLTQKKLL (92 aa). Residues Arg-11, Arg-28, Lys-39, Asp-48, Glu-52, Ser-84, and Gln-88 each coordinate substrate. The Prephenate dehydratase domain maps to 105-285; it reads SFSFLGPKGS…NITRFILLSR (181 aa). The interval 286–385 is regulatory; it reads KPVSISSKIP…PSENITPIIP (100 aa). One can recognise an ACT domain in the interval 299–376; the sequence is TLIFNTGQES…KFIKILGCYP (78 aa).

Its subcellular location is the cytoplasm. It catalyses the reaction chorismate = prephenate. It carries out the reaction prephenate + H(+) = 3-phenylpyruvate + CO2 + H2O. The protein operates within amino-acid biosynthesis; L-phenylalanine biosynthesis; phenylpyruvate from prephenate: step 1/1. Its pathway is metabolic intermediate biosynthesis; prephenate biosynthesis; prephenate from chorismate: step 1/1. Catalyzes the Claisen rearrangement of chorismate to prephenate and the decarboxylation/dehydration of prephenate to phenylpyruvate. This chain is Bifunctional chorismate mutase/prephenate dehydratase (pheA), found in Buchnera aphidicola subsp. Schizaphis graminum (strain Sg).